The chain runs to 494 residues: Ribosomal lysine N-methyltransferase 4 (494 aa).

Positions 25–265 (PKIEIKDLCC…KNEQVYNIYG (241 aa)) constitute an SET domain. Residue Tyr-264 participates in S-adenosyl-L-methionine binding.

This sequence belongs to the class V-like SAM-binding methyltransferase superfamily. Histone-lysine methyltransferase family. SETD6 subfamily.

It localises to the nucleus. In terms of biological role, S-adenosyl-L-methionine-dependent protein-lysine N-methyltransferase that monomethylates 60S ribosomal protein L42 (RPL42A and RPL42B) at 'Lys-55'. The sequence is that of Ribosomal lysine N-methyltransferase 4 from Saccharomyces cerevisiae (strain ATCC 204508 / S288c) (Baker's yeast).